The following is a 308-amino-acid chain: Protein translocase subunit SecF (308 aa).

A run of 6 helical transmembrane segments spans residues 10-30 (LFFA…AIFG), 129-149 (LAVS…FRGV), 160-180 (IIAM…GGVL), 181-201 (FGWQ…GFSV), 241-261 (TQLM…GITL), and 264-284 (FAII…FIAA).

This sequence belongs to the SecD/SecF family. SecF subfamily. Forms a complex with SecD. Part of the essential Sec protein translocation apparatus which comprises SecA, SecYEG and auxiliary proteins SecDF. Other proteins may also be involved.

Its subcellular location is the cell membrane. Part of the Sec protein translocase complex. Interacts with the SecYEG preprotein conducting channel. SecDF uses the proton motive force (PMF) to complete protein translocation after the ATP-dependent function of SecA. This is Protein translocase subunit SecF from Anaerolinea thermophila (strain DSM 14523 / JCM 11388 / NBRC 100420 / UNI-1).